The sequence spans 222 residues: Embryonic stem cell-related gene protein (222 aa).

As to expression, expressed only in fetal ovary and in undifferentiated ES cells.

The protein resides in the nucleus. This Homo sapiens (Human) protein is Embryonic stem cell-related gene protein (ESRG).